Reading from the N-terminus, the 612-residue chain is Elongation factor 4 (612 aa).

Residues 11–193 (KHIRNFSIVA…RIVTDISAPT (183 aa)) form the tr-type G domain. GTP-binding positions include 23–28 (DHGKST) and 140–143 (NKID).

It belongs to the TRAFAC class translation factor GTPase superfamily. Classic translation factor GTPase family. LepA subfamily.

It localises to the cell membrane. The catalysed reaction is GTP + H2O = GDP + phosphate + H(+). In terms of biological role, required for accurate and efficient protein synthesis under certain stress conditions. May act as a fidelity factor of the translation reaction, by catalyzing a one-codon backward translocation of tRNAs on improperly translocated ribosomes. Back-translocation proceeds from a post-translocation (POST) complex to a pre-translocation (PRE) complex, thus giving elongation factor G a second chance to translocate the tRNAs correctly. Binds to ribosomes in a GTP-dependent manner. This Lactobacillus delbrueckii subsp. bulgaricus (strain ATCC 11842 / DSM 20081 / BCRC 10696 / JCM 1002 / NBRC 13953 / NCIMB 11778 / NCTC 12712 / WDCM 00102 / Lb 14) protein is Elongation factor 4.